The chain runs to 236 residues: Ras-related protein RabY (236 aa).

18–25 (GDRKTGKT) contacts GTP. An Effector region motif is present at residues 40–48 (YRQTNLLHF). GTP-binding positions include 66 to 70 (DSQAD) and 126 to 129 (NKSD). Residues 192-225 (QQQQQQQQQQQQQQQQQQQQQQQQQQQQQQQHQQ) show a composition bias toward low complexity. Residues 192–236 (QQQQQQQQQQQQQQQQQQQQQQQQQQQQQQQHQQSSKTKIGCLIQ) are disordered. Residue Cys233 is modified to Cysteine methyl ester. Cys233 carries S-geranylgeranyl cysteine lipidation. The propeptide at 234 to 236 (LIQ) is removed in mature form.

This sequence belongs to the small GTPase superfamily. Rab family.

It is found in the cell membrane. The protein is Ras-related protein RabY (rabY) of Dictyostelium discoideum (Social amoeba).